The following is a 723-amino-acid chain: Nuclear hormone receptor HR96 (723 aa).

The segment at residues 4 to 79 is a DNA-binding region (nuclear receptor); the sequence is PKNCAVCGDK…IGMKSENIMS (76 aa). 2 NR C4-type zinc fingers span residues 7–27 and 43–67; these read CAVCGDKALGYNFNAVTCESC and CPFNQNCDITVVTRRFCQKCRLRKC. The tract at residues 95–163 is disordered; sequence AKRRLMENGT…QASSPGTQVN (69 aa). Composition is skewed to polar residues over residues 122–142 and 151–163; these read DSSSSNLDHYSGSQDSQSCGS and SGRQASSPGTQVN. Residues 483–723 form the NR LBD domain; the sequence is EQMKLRELRL…LREIFDLKNH (241 aa).

This sequence belongs to the nuclear hormone receptor family. NR1 subfamily.

The protein resides in the nucleus. In terms of biological role, binds selectively to the HSP27 20E response element. This Drosophila melanogaster (Fruit fly) protein is Nuclear hormone receptor HR96 (Hr96).